Reading from the N-terminus, the 140-residue chain is Extracellular globin-1 (140 aa).

The Globin domain occupies 1–140; that stretch reads ECDVLERFKV…YDFIASGIKP (140 aa). Cysteines 2 and 130 form a disulfide. His-93 lines the heme b pocket.

This sequence belongs to the globin family. In terms of assembly, the giant hemoglobins of worms are formed of a monomeric subunit and a disulfide-bonded trimer. This subunit is monomeric.

The protein localises to the secreted. This chain is Extracellular globin-1, found in Metaphire hilgendorfi (Earthworm).